The sequence spans 187 residues: Imidazoleglycerol-phosphate dehydratase (187 aa).

It belongs to the imidazoleglycerol-phosphate dehydratase family.

The protein localises to the cytoplasm. The enzyme catalyses D-erythro-1-(imidazol-4-yl)glycerol 3-phosphate = 3-(imidazol-4-yl)-2-oxopropyl phosphate + H2O. The protein operates within amino-acid biosynthesis; L-histidine biosynthesis; L-histidine from 5-phospho-alpha-D-ribose 1-diphosphate: step 6/9. This Pyrobaculum calidifontis (strain DSM 21063 / JCM 11548 / VA1) protein is Imidazoleglycerol-phosphate dehydratase.